A 673-amino-acid polypeptide reads, in one-letter code: UvrABC system protein B (673 aa).

Residues Glu25–Arg413 form the Helicase ATP-binding domain. Gly38 to Thr45 contributes to the ATP binding site. The Beta-hairpin signature appears at Tyr91–Val114. Positions Gln430–Ile583 constitute a Helicase C-terminal domain. The 36-residue stretch at Asp634–Gln669 folds into the UVR domain.

This sequence belongs to the UvrB family. As to quaternary structure, forms a heterotetramer with UvrA during the search for lesions. Interacts with UvrC in an incision complex.

It is found in the cytoplasm. Its function is as follows. The UvrABC repair system catalyzes the recognition and processing of DNA lesions. A damage recognition complex composed of 2 UvrA and 2 UvrB subunits scans DNA for abnormalities. Upon binding of the UvrA(2)B(2) complex to a putative damaged site, the DNA wraps around one UvrB monomer. DNA wrap is dependent on ATP binding by UvrB and probably causes local melting of the DNA helix, facilitating insertion of UvrB beta-hairpin between the DNA strands. Then UvrB probes one DNA strand for the presence of a lesion. If a lesion is found the UvrA subunits dissociate and the UvrB-DNA preincision complex is formed. This complex is subsequently bound by UvrC and the second UvrB is released. If no lesion is found, the DNA wraps around the other UvrB subunit that will check the other stand for damage. The sequence is that of UvrABC system protein B from Colwellia psychrerythraea (strain 34H / ATCC BAA-681) (Vibrio psychroerythus).